A 111-amino-acid polypeptide reads, in one-letter code: Putative lipid-binding protein AIR1 (111 aa).

Positions 1–23 (MAPRTPLALFVSLNLLFFTYTSA) are cleaved as a signal peptide. 3 disulfides stabilise this stretch: Cys28/Cys58, Cys38/Cys57, and Cys74/Cys110.

This sequence belongs to the plant LTP family. PEARLI1 subfamily.

The protein localises to the secreted. This Arabidopsis thaliana (Mouse-ear cress) protein is Putative lipid-binding protein AIR1 (AIR1).